The chain runs to 372 residues: tRNA-specific 2-thiouridylase MnmA (372 aa).

ATP is bound by residues 16 to 23 (GMSGGVDS) and M42. An interaction with target base in tRNA region spans residues 102 to 104 (NPD). C107 serves as the catalytic Nucleophile. C107 and C205 are oxidised to a cystine. Residue G132 participates in ATP binding. The interval 155–157 (KDQ) is interaction with tRNA. The Cysteine persulfide intermediate role is filled by C205. Residues 317–318 (RY) are interaction with tRNA.

Belongs to the MnmA/TRMU family.

It localises to the cytoplasm. The enzyme catalyses S-sulfanyl-L-cysteinyl-[protein] + uridine(34) in tRNA + AH2 + ATP = 2-thiouridine(34) in tRNA + L-cysteinyl-[protein] + A + AMP + diphosphate + H(+). In terms of biological role, catalyzes the 2-thiolation of uridine at the wobble position (U34) of tRNA, leading to the formation of s(2)U34. This chain is tRNA-specific 2-thiouridylase MnmA, found in Shewanella denitrificans (strain OS217 / ATCC BAA-1090 / DSM 15013).